Here is a 55-residue protein sequence, read N- to C-terminus: MRLAIILLLMTTIVLTIGSPLHGAKCSSSNQCTRPCRYGGGTHGKCMNGRCRCYG.

Positions 1-18 (MRLAIILLLMTTIVLTIG) are cleaved as a signal peptide. Intrachain disulfides connect cysteine 26-cysteine 46, cysteine 32-cysteine 51, and cysteine 36-cysteine 53.

It belongs to the short scorpion toxin superfamily. Potassium channel inhibitor family. Alpha-KTx 12 subfamily. Expressed by the venom gland.

It localises to the secreted. In terms of biological role, blocks mouse voltage-gated potassium channels Kv1.3/KCNA3 (IC(50)=0.3-30 nM), when the channel is expressed in Jurkat T cells or in HEK293 cells. Also shows a weaker inhibition on mKv1.2/KCNA2 (IC(50)=56.9 nM) and mKv1.1/KCNA1 (IC(50)=485 nM). Probably through the inhibition of both Kv1.2/KCNA2 and Kv1.3/KCNA3, the toxin also reduces the free calcium concentration in Jurkat T cells, inhibits the activation of Jurkat T cells and reduces the release of inflammatory cytokines interleukin-2, showing a strong immunosuppressant effect. The protein is Potassium channel toxin alpha-KTX 12 Sp2 of Scorpiops pococki (Scorpion).